The following is a 201-amino-acid chain: Outer-membrane lipoprotein LolB (201 aa).

The N-terminal stretch at 1 to 18 (MKWCRLSIILMSLILLAG) is a signal peptide. The N-palmitoyl cysteine moiety is linked to residue Cys-19. A lipid anchor (S-diacylglycerol cysteine) is attached at Cys-19.

Belongs to the LolB family. As to quaternary structure, monomer.

The protein localises to the cell outer membrane. Its function is as follows. Plays a critical role in the incorporation of lipoproteins in the outer membrane after they are released by the LolA protein. The protein is Outer-membrane lipoprotein LolB of Nitrosococcus oceani (strain ATCC 19707 / BCRC 17464 / JCM 30415 / NCIMB 11848 / C-107).